The following is a 345-amino-acid chain: tRNA pseudouridine synthase B (345 aa).

Catalysis depends on Asp39, which acts as the Nucleophile.

Belongs to the pseudouridine synthase TruB family. Type 1 subfamily.

It catalyses the reaction uridine(55) in tRNA = pseudouridine(55) in tRNA. In terms of biological role, responsible for synthesis of pseudouridine from uracil-55 in the psi GC loop of transfer RNAs. This chain is tRNA pseudouridine synthase B, found in Rickettsia africae (strain ESF-5).